Consider the following 386-residue polypeptide: MNIHEYQAKELLREFGVAVPTGYPAFTVEEAVAAAAKLDGEVKVVKAQIHAGGRGKAGGVKLAKTDEEVKQYASEILGKTLVTHQTGPEGKVVQRLYIEEGSAIDQEFYLGLVLDRSIGRIVIMGSSEGGMDIEEVAEHTPEKIHKEIVDPVVGLRPFQARRLAFKMEVPTKLVNEFSDMVMKLYKVYVETDCTIAEINPLVTTKDGNVIALDAKLNFDSNALYRHSDILALRDTTEEDPREVEASKHDLSYIALDGNIGCLVNGAGLAMATMDIIKHYGAEPANFLDVGGGATKEKVTEAFKLILSDDQVKGIFVNIFGGIMKCDIIAEGIVAATKEIGLDLPLVVRLEGTNVDAGKRILDESGLAITTANSMADGAEKIAALVR.

The region spanning 9-244 (KELLREFGVA…TTEEDPREVE (236 aa)) is the ATP-grasp domain. ATP is bound by residues Lys46, 53–55 (GRG), Glu99, Ser102, and Glu107. 2 residues coordinate Mg(2+): Asn199 and Asp213. Substrate is bound by residues Asn264 and 321–323 (GIM).

Belongs to the succinate/malate CoA ligase beta subunit family. As to quaternary structure, heterotetramer of two alpha and two beta subunits. It depends on Mg(2+) as a cofactor.

The enzyme catalyses succinate + ATP + CoA = succinyl-CoA + ADP + phosphate. It catalyses the reaction GTP + succinate + CoA = succinyl-CoA + GDP + phosphate. Its pathway is carbohydrate metabolism; tricarboxylic acid cycle; succinate from succinyl-CoA (ligase route): step 1/1. Functionally, succinyl-CoA synthetase functions in the citric acid cycle (TCA), coupling the hydrolysis of succinyl-CoA to the synthesis of either ATP or GTP and thus represents the only step of substrate-level phosphorylation in the TCA. The beta subunit provides nucleotide specificity of the enzyme and binds the substrate succinate, while the binding sites for coenzyme A and phosphate are found in the alpha subunit. The chain is Succinate--CoA ligase [ADP-forming] subunit beta from Exiguobacterium sp. (strain ATCC BAA-1283 / AT1b).